Consider the following 389-residue polypeptide: GDSL esterase/lipase At5g14450 (389 aa).

The N-terminal stretch at 1–30 (MKDNLERAKLMVSSTVFSWLLLCLFAVTTS) is a signal peptide. Ser-48 acts as the Nucleophile in catalysis. 2 N-linked (GlcNAc...) asparagine glycosylation sites follow: Asn-125 and Asn-335. Active-site residues include Asp-354 and His-357.

Belongs to the 'GDSL' lipolytic enzyme family.

The protein resides in the secreted. This Arabidopsis thaliana (Mouse-ear cress) protein is GDSL esterase/lipase At5g14450.